The chain runs to 349 residues: Increased DNA methylation 2 (349 aa).

The disordered stretch occupies residues 210-230 (EDNAGTCTSGEESDVAAKPEV). Positions 233 to 349 (EAHGGLMVGL…VMKNLQKQTV (117 aa)) constitute a sHSP domain.

It belongs to the small heat shock protein (HSP20) family. As to quaternary structure, homodimer or oligomer. May form an 16-mer complex. Interacts with MBD7 (via C-terminus). Interacts with IDM1 (via N-terminus). Interacts with IMD3. Part of a complex made of MBD7, IDM1, IDM2, IDM3 and ROS1. In terms of tissue distribution, expressed in cotyledons and hypocotyls in young seedlings.

The protein resides in the nucleus. The protein localises to the nucleoplasm. Its function is as follows. Prevents DNA hypermethylation and transcriptional silencing of transgenes and of some endogenous genes. May act as a molecular chaperone of IDM1, regulating its H3K18 acetylation activity. The sequence is that of Increased DNA methylation 2 from Arabidopsis thaliana (Mouse-ear cress).